We begin with the raw amino-acid sequence, 682 residues long: Actin-binding LIM protein 3 (682 aa).

Met-1 is modified (N-acetylmethionine). 4 LIM zinc-binding domains span residues 21–80 (IQCY…LYGT), 80–140 (TRCD…MTSS), 149–208 (SHCA…QFGI), and 208–268 (IKCE…ARAE). A phosphoserine mark is found at Ser-277, Ser-280, Ser-282, Ser-286, Ser-290, Ser-337, Ser-372, and Ser-373. Disordered stretches follow at residues 372–426 (SSPG…SYQA) and 440–475 (YRKPPIYKRHGDLSTATKSKTSEDISQASKYSPAYS). Tyr-376 is subject to Phosphotyrosine. 2 positions are modified to phosphoserine: Ser-379 and Ser-388. 3 stretches are compositionally biased toward polar residues: residues 380 to 393 (PTYSRQGMSPTFSR), 405 to 425 (GRSSPYHSQLDVRSSTPTSYQ), and 453 to 466 (STATKSKTSEDISQ). Phosphoserine is present on residues Ser-492, Ser-502, and Ser-503. Thr-542 is modified (phosphothreonine). Residues Ser-566, Ser-575, and Ser-606 each carry the phosphoserine modification. An HP domain is found at 614–682 (MREYKIYPYE…NELKKQARLF (69 aa)). Arg-630 bears the Omega-N-methylarginine mark.

As to quaternary structure, directly interacts with F-actin and ABRA. As to expression, expressed in heart, brain, lung and liver. In the brain, highly expressed in the olfactory bulb. In the hippocampus, expressed selectively in the CA2 and CA3 fields. In the cerebellum, expressed in internal granular cells.

Its subcellular location is the cytoplasm. Its function is as follows. May act as scaffold protein. May stimulate ABRA activity and ABRA-dependent SRF transcriptional activity. The protein is Actin-binding LIM protein 3 (Ablim3) of Mus musculus (Mouse).